The chain runs to 625 residues: DNA mismatch repair protein MutL (625 aa).

The protein belongs to the DNA mismatch repair MutL/HexB family.

In terms of biological role, this protein is involved in the repair of mismatches in DNA. It is required for dam-dependent methyl-directed DNA mismatch repair. May act as a 'molecular matchmaker', a protein that promotes the formation of a stable complex between two or more DNA-binding proteins in an ATP-dependent manner without itself being part of a final effector complex. This chain is DNA mismatch repair protein MutL, found in Azorhizobium caulinodans (strain ATCC 43989 / DSM 5975 / JCM 20966 / LMG 6465 / NBRC 14845 / NCIMB 13405 / ORS 571).